We begin with the raw amino-acid sequence, 1333 residues long: Inner capsid protein VP1 (1333 aa).

Residues M1 to K10 show a composition bias toward polar residues. The tract at residues M1–T93 is disordered. Residues R11–P20 are compositionally biased toward basic and acidic residues. Residues D64–R82 show a composition bias toward polar residues.

The protein belongs to the turreted BTV-fold inner capsid family. As to quaternary structure, homodecamer; each decamer is made up of two conformers of VP2, called VP2A and VP2B. 12 homodecamers assemble to form an icosahedral capsid.

It is found in the virion. Inner capsid protein that self-assembles to form an icosahedral capsid with a T=2 symmetry, which consists of 120 copies of VP2, with channels at each of its five-fold vertices. This capsid constitutes the innermost concentric layer of the viral mature particle. The polypeptide is Inner capsid protein VP1 (S1) (Lymantria dispar cypovirus 1 (isolate Rao) (LdCPV-1)).